The chain runs to 90 residues: Probable Fe(2+)-trafficking protein (90 aa).

The protein belongs to the Fe(2+)-trafficking protein family.

Functionally, could be a mediator in iron transactions between iron acquisition and iron-requiring processes, such as synthesis and/or repair of Fe-S clusters in biosynthetic enzymes. This chain is Probable Fe(2+)-trafficking protein, found in Nitrosomonas eutropha (strain DSM 101675 / C91 / Nm57).